A 65-amino-acid polypeptide reads, in one-letter code: Kassorin-M (65 aa).

An N-terminal signal peptide occupies residues 1 to 22 (MLTLKKSMLLLFFLGMVSFSLA). Positions 23–51 (DDKREDEAEEGEDKRADEGEEKRAAEKKR) are excised as a propeptide. The tract at residues 24 to 45 (DKREDEAEEGEDKRADEGEEKR) is disordered. Leu64 is subject to Leucine amide.

Belongs to the frog skin active peptide (FSAP) family. Brevinin subfamily. In terms of tissue distribution, expressed by the skin glands.

The protein localises to the secreted. Its function is as follows. Induces contraction of smooth muscle in isolated guinea pig urinary bladder (EC50=4.66 nM). Has no antimicrobial activity against the Gram-positive bacterium S.aureus, the Gram-negative bacterium E.coli and the yeast C.albicans. Elicits histamine release from rat peritoneal mast cells. The protein is Kassorin-M of Phlyctimantis maculatus (Red-legged running frog).